The following is a 462-amino-acid chain: tRNA(Ile)-lysidine synthase (462 aa).

ATP is bound at residue 27–32; sequence SGGPDS.

It belongs to the tRNA(Ile)-lysidine synthase family.

It is found in the cytoplasm. It catalyses the reaction cytidine(34) in tRNA(Ile2) + L-lysine + ATP = lysidine(34) in tRNA(Ile2) + AMP + diphosphate + H(+). In terms of biological role, ligates lysine onto the cytidine present at position 34 of the AUA codon-specific tRNA(Ile) that contains the anticodon CAU, in an ATP-dependent manner. Cytidine is converted to lysidine, thus changing the amino acid specificity of the tRNA from methionine to isoleucine. The sequence is that of tRNA(Ile)-lysidine synthase from Clostridioides difficile (strain 630) (Peptoclostridium difficile).